A 468-amino-acid chain; its full sequence is Ribulose bisphosphate carboxylase large chain (468 aa).

Lys-5 carries the N6,N6,N6-trimethyllysine modification. Asn-114 and Thr-164 together coordinate substrate. Lys-166 functions as the Proton acceptor in the catalytic mechanism. A substrate-binding site is contributed by Lys-168. Residues Lys-192, Asp-194, and Glu-195 each contribute to the Mg(2+) site. Lys-192 bears the N6-carboxylysine mark. His-285 acts as the Proton acceptor in catalysis. 3 residues coordinate substrate: Arg-286, His-318, and Ser-370.

Belongs to the RuBisCO large chain family. Type I subfamily. Heterohexadecamer of 8 large chains and 8 small chains; disulfide-linked. The disulfide link is formed within the large subunit homodimers. Mg(2+) is required as a cofactor. Post-translationally, the disulfide bond which can form in the large chain dimeric partners within the hexadecamer appears to be associated with oxidative stress and protein turnover.

It is found in the plastid. It localises to the chloroplast. The catalysed reaction is 2 (2R)-3-phosphoglycerate + 2 H(+) = D-ribulose 1,5-bisphosphate + CO2 + H2O. It carries out the reaction D-ribulose 1,5-bisphosphate + O2 = 2-phosphoglycolate + (2R)-3-phosphoglycerate + 2 H(+). Functionally, ruBisCO catalyzes two reactions: the carboxylation of D-ribulose 1,5-bisphosphate, the primary event in carbon dioxide fixation, as well as the oxidative fragmentation of the pentose substrate in the photorespiration process. Both reactions occur simultaneously and in competition at the same active site. The sequence is that of Ribulose bisphosphate carboxylase large chain from Nolana spathulata (Chilean bell flower).